We begin with the raw amino-acid sequence, 736 residues long: MNSKIAYPEIKISGAFRPDKIQEKGKSNRCDTHCSGSSWTSFKSKILKICAPLCCMGSDNDESMAEMPLEPQVEPKSIENNYTLKKKNEEGFLSQQENKSSNQNPSKANNLFDKLGVSKPITFIACILQLGGTSFMESELQTKLSTINSSPFKSLSQYWNAAYNKKESISSSTNSNIKLHLAARKYQTKPEKFNENSSISQVTSAIKATKAFSHLTQPKRALLKESNTGDKDIFKPRYPQLLSCRFTTLSKLAPINNSKSAPKGTHKPNHSENAELKDIKQSSELSDLSLSSQILYPESTTLSEISPIYDSELAIENILESKCFENEQAIIEGVKDFTEFPDLEETQIIYSDLIASSEVSPIYDSELKYESVLESKSSRNEQATIKEKKDNERVLDLSQQCTKFLFSDQKVITPSFCKFAQVSDMCSTEIPWVNFFCDNLDICIEDVQFKSKAFFPPTVTITIFEHEDKNLMNVFDTKNGTSKTLVKPQITNSCLENMLSLVNKNSCIKRLHLKLSKGIMDIKVLTHQLMLYDLYPPAHQTYLWKALERLVNEKVSLGELTPVHKVAAEKRIGDIRMHLIESSDIYVVTENHRWLHIVCEGFNCFLELPEVLHGKKFLKVDEATREDMLMSAETPDDILWITTLISTGSSMSHFPLHAYLEAKERQEFTKKNLLLFCKEDEFLYSDQENEDLLESFERVISEELSLLKSNEPSDISLKKRKRRKNCEKRILGTMMY.

The protein belongs to the UPF0300 family.

The polypeptide is Meiotic expression up-regulated protein 27 (meu27) (Schizosaccharomyces pombe (strain 972 / ATCC 24843) (Fission yeast)).